Reading from the N-terminus, the 185-residue chain is Elongation factor P (185 aa).

Belongs to the elongation factor P family.

The protein resides in the cytoplasm. It functions in the pathway protein biosynthesis; polypeptide chain elongation. Involved in peptide bond synthesis. Stimulates efficient translation and peptide-bond synthesis on native or reconstituted 70S ribosomes in vitro. Probably functions indirectly by altering the affinity of the ribosome for aminoacyl-tRNA, thus increasing their reactivity as acceptors for peptidyl transferase. In Moorella thermoacetica (strain ATCC 39073 / JCM 9320), this protein is Elongation factor P.